A 241-amino-acid polypeptide reads, in one-letter code: Large ribosomal subunit protein uL13c (241 aa).

The N-terminal 50 residues, 1–50 (MAVLCSSSTVILSSSSVKSSGSERKSPFLGFSLTAISKPSVRVGIYANSK), are a transit peptide targeting the chloroplast.

The protein belongs to the universal ribosomal protein uL13 family. Part of the 50S ribosomal subunit.

Its subcellular location is the plastid. The protein resides in the chloroplast. This is Large ribosomal subunit protein uL13c (RPL13) from Arabidopsis thaliana (Mouse-ear cress).